Reading from the N-terminus, the 1030-residue chain is MSTQQALAQANEHALSQANDLIKVGSKLRALSVLRDLLSDRSQWHSSLEQIMSLYVSLCAEQLDYQSLRDGIHHFKVSIMSQKEFSIVPLENIFKEIITPIEQKVDELKEKIEKENQENPLVEQNEISLIDPQQTLLFSYMKYLFEAYKAMIEVLTRQNTKFEHTKFDHSKFDSTLLKISTQALNYCSKYQRKPDFMVLTELFRSSIEQLFKVPSLDTVNTHIEIRFHQLTVAISLGLYLIAYKSIEDINIMLFSLLVKPKPVVLATYYQKLAQVYWITNAHLLHAYALYKHYVYNKNYNMNFTQADSQLYSSVLLVAALSSPIQEVNQNQSLLQFDSQSQRAMGLASLLSLQSIPKRETFLVDVRKVTNEVYPELADLASIFEKKTSPLMFAKLLEPKIKFIEGHAQLSQYLKPFLRVVFTKIALQVSKVYEVIKIEEFIKLVPFYTKTQIELYLLESIKRKLIGARIDHKNGVIRFGHYDFDSAKISDQLSNLATGVGKALNMIEPEKKQQQHDKLKKEVYVKIINSLQDEHRRILARKEIIEKKKIYMEQQDRIKKQKEHEELQKKIQEKVARDQQRLKEDMERREKEQAEEESQQNQLDQTINAIDKAKVEMKAKIAKIAKQLYILERAYREEELPVVESLQKTKAVEDKQYFESTQAEFLKLHREVHDRNVTEKARLNRIVPEYQKFTQAVIEERKKQLPALQKEQEKRFQEFLIQQEQDVQERKAKREKARIAAAQEKARKEEQERERLEQEHLEQERLEEERKNAPYVPPSSRRTFRDDDDEREESGRWGGRRGGDDFGRSKADEGDRWGRREDAPPPRRDEGGDRWGRREDAPPPRRDEGGDRWGKREDAPPPRRDEGGWGRRDDAPPPRRDEGGDRWGRRDDAPPRRDDAPPPRRDDAPPPRRDEGGDRWGRRDDAPPRRDGGGSGGFGGRRDDAPPRRDEGGDRWGRREDAPPPRRDEGGDRWGRRDDAPPRRDGGGGSGFGRNQGAQGDQNDSWRSDNKKEENKKDADGWQTVGAKKRY.

Residues 94–126 (FKEIITPIEQKVDELKEKIEKENQENPLVEQNE) adopt a coiled-coil conformation. One can recognise a PCI domain in the interval 308–483 (SQLYSSVLLV…GVIRFGHYDF (176 aa)). Coiled-coil stretches lie at residues 527 to 620 (INSL…KAKI) and 720 to 772 (IQQE…RKNA). Composition is skewed to basic and acidic residues over residues 576-591 (RDQQ…REKE), 743-771 (EKAR…ERKN), 800-931 (RGGD…RRDG), 939-985 (GRRD…RRDG), and 1003-1019 (DSWR…KDAD). Disordered stretches follow at residues 576–603 (RDQQ…NQLD) and 737–1030 (RIAA…KKRY).

The protein belongs to the eIF-3 subunit A family. As to quaternary structure, component of the eukaryotic translation initiation factor 3 (eIF-3) complex.

Its subcellular location is the cytoplasm. In terms of biological role, RNA-binding component of the eukaryotic translation initiation factor 3 (eIF-3) complex, which is involved in protein synthesis of a specialized repertoire of mRNAs and, together with other initiation factors, stimulates binding of mRNA and methionyl-tRNAi to the 40S ribosome. The eIF-3 complex specifically targets and initiates translation of a subset of mRNAs involved in cell proliferation. The chain is Eukaryotic translation initiation factor 3 subunit A (eif3A) from Dictyostelium discoideum (Social amoeba).